The primary structure comprises 267 residues: Myeloid leukemia factor 1 (267 aa).

A phosphoserine mark is found at serine 6, serine 8, serine 32, and serine 34. Residues 39-67 (RDLLSISDGRGRTHNRRERDDGEDSLTHA) are disordered. The segment at 50–125 (RTHNRRERDD…VGDEPPKVFQ (76 aa)) is interaction with COPS3.

Belongs to the MLF family. Interacts with CENPU. Also interacts with NRBP1/MADM, YWHAZ/14-3-3-zeta and HNRPUL2/MANP. NRBP1 recruits a serine kinase which phosphorylates both itself and MLF1. Phosphorylated MLF1 then binds to YWHAZ and is retained in the cytoplasm. Retained in the nucleus by binding to HNRPUL2. Binds to COPS3/CSN3 which is required for suppression of COP1 and activation of p53. Post-translationally, phosphorylation is required for binding to YWHAZ. As to expression, highly expressed in skeletal muscle, heart, testis. Also found in lung, but not in spleen, thymus, bone marrow, liver and kidney.

The protein localises to the cytoplasm. It is found in the nucleus. Its subcellular location is the cell projection. The protein resides in the cilium. It localises to the cytoskeleton. The protein localises to the cilium basal body. Functionally, involved in lineage commitment of primary hemopoietic progenitors by restricting erythroid formation and enhancing myeloid formation. Interferes with erythropoietin-induced erythroid terminal differentiation by preventing cells from exiting the cell cycle through suppression of CDKN1B/p27Kip1 levels. Suppresses COP1 activity via CSN3 which activates p53 and induces cell cycle arrest. Binds DNA and affects the expression of a number of genes so may function as a transcription factor in the nucleus. The polypeptide is Myeloid leukemia factor 1 (Mlf1) (Mus musculus (Mouse)).